Here is a 187-residue protein sequence, read N- to C-terminus: Ion-translocating oxidoreductase complex subunit B (187 aa).

The interval 1 to 23 (MIAAAASMSALGLGLGYLLGAAA) is hydrophobic. Positions 29 to 88 (ETPPIVEEIAKILPGTNCGACGFPGCNGLAEAMAEGNAPVTACTPGGRDVALALAEIVTV) constitute a 4Fe-4S domain. Positions 46, 49, 54, 71, 112, 115, 118, 122, 142, 145, 148, and 152 each coordinate [4Fe-4S] cluster. 2 4Fe-4S ferredoxin-type domains span residues 103 to 132 (MVAF…GGAK) and 133 to 162 (QIHT…SRVK).

It belongs to the 4Fe4S bacterial-type ferredoxin family. RnfB subfamily. The complex is composed of six subunits: RnfA, RnfB, RnfC, RnfD, RnfE and RnfG. [4Fe-4S] cluster is required as a cofactor.

The protein resides in the cellular chromatophore membrane. Functionally, part of a membrane-bound complex that couples electron transfer with translocation of ions across the membrane. Required for nitrogen fixation. Involved in electron transfer to nitrogenase. The sequence is that of Ion-translocating oxidoreductase complex subunit B from Rhodobacter capsulatus (Rhodopseudomonas capsulata).